Here is a 70-residue protein sequence, read N- to C-terminus: Putative membrane protein insertion efficiency factor (70 aa).

This sequence belongs to the UPF0161 family.

It localises to the cell membrane. In terms of biological role, could be involved in insertion of integral membrane proteins into the membrane. This Chloroflexus aurantiacus (strain ATCC 29366 / DSM 635 / J-10-fl) protein is Putative membrane protein insertion efficiency factor.